Reading from the N-terminus, the 744-residue chain is 4'-phospho-dehydrooxetanocin synthase (744 aa).

A B12-binding domain is found at 119 to 259; sequence TVTLVNLCVI…KMLKKELKLD (141 aa). Residues arginine 135, serine 139, serine 184, glycine 241, glutamate 242, and glutamate 308 each contribute to the cob(II)alamin site. The 247-residue stretch at 299–545 folds into the Radical SAM core domain; the sequence is SKFRGALTLE…IVSYMLASME (247 aa). [4Fe-4S] cluster-binding residues include cysteine 313, cysteine 318, and cysteine 321. The cob(II)alamin site is built by proline 322, histidine 325, lysine 326, alanine 361, and glutamate 363. 2 residues coordinate S-adenosyl-L-methionine: glutamate 436 and glutamate 545.

The protein belongs to the radical SAM superfamily. [4Fe-4S] cluster is required as a cofactor. It depends on cob(II)alamin as a cofactor.

The enzyme catalyses dAMP + S-adenosyl-L-methionine = 4'-phospho-dehydrooxetanocin + 5'-deoxyadenosine + L-methionine + H(+). It carries out the reaction AH2 + 2 S-adenosyl-L-methionine = 2 5'-deoxyadenosin-5'-yl radical + 2 L-methionine + A + 2 H(+). It catalyses the reaction 2 5'-deoxyadenosin-5'-yl radical + 2 dAMP + A = 2 4'-phospho-dehydrooxetanocin + 2 5'-deoxyadenosine + AH2. Its activity is regulated as follows. Requires OxsA for the oxidative ring contraction activity. Activation of OxsB requires its direct interaction with OxsA and is independent of OxsA phosphohydrolase activity. In contrast to ring contraction, methylation does not require the presence of OxsA. Functionally, isomerase involved in the biosynthesis of oxetanocin A (OXT-A), a nucleoside analog with antitumor, antiviral and antibacterial properties. Catalyzes an oxidative ring contraction of dAMP, forming an oxetane aldehyde. In addition, shows methyltransferase activity in vitro and is able to catalyze the radical mediated, stereoselective C2'-methylation of dAMP to form methylated 2'-dAMP. Also catalyzes the demethylation of S-adenosyl-L-methionine (SAM) to S-adenosyl-L-homocysteine (SAH). The sequence is that of 4'-phospho-dehydrooxetanocin synthase from Priestia megaterium (Bacillus megaterium).